A 354-amino-acid chain; its full sequence is Peroxisomal membrane protein PEX32 (354 aa).

Transmembrane regions (helical) follow at residues 24-44 (LLNM…VIFL), 63-83 (FIAI…ACTV), 84-104 (LPTI…TTID), 151-171 (GFSL…IFTV), and 173-193 (SFLL…SVAT). Residue Asn-319 is glycosylated (N-linked (GlcNAc...) asparagine).

It belongs to the PEX28-32 family. PEX30/31 subfamily.

Its subcellular location is the peroxisome membrane. It localises to the endoplasmic reticulum membrane. Its function is as follows. With PEX24, contributes to tethering of peroxisomes to the endoplasmic reticulum for organelle biogenesis, positioning and segregation. This chain is Peroxisomal membrane protein PEX32, found in Ogataea parapolymorpha (strain ATCC 26012 / BCRC 20466 / JCM 22074 / NRRL Y-7560 / DL-1) (Yeast).